A 582-amino-acid chain; its full sequence is Sorting nexin-4 (582 aa).

A compositionally biased stretch (polar residues) spans 1-11; it reads MSSDDQFTSIQ. The segment at 1 to 111 is disordered; it reads MSSDDQFTSI…VNQEPSSDSQ (111 aa). 2 stretches are compositionally biased toward basic and acidic residues: residues 12–27 and 35–54; these read WDRDELGPNKETKVNK and DEHHNNDNEDKDNDTTKSNE. Positions 57–70 are enriched in acidic residues; that stretch reads NIQEDDETKDDNEP. Residues 116-249 enclose the PX domain; that stretch reads EINVVVTSPL…HLFVSDSADW (134 aa). 3 residues coordinate a 1,2-diacyl-sn-glycero-3-phospho-(1D-myo-inositol-3-phosphate): Arg-171, Lys-197, and Arg-216. Coiled-coil stretches lie at residues 300–329 and 494–529; these read SKHKRETNKEILEISDKLKKLYENLIKLDK and SSVTESKVTKLQNRITELENEISVQSQLVLDLTNKI.

The protein belongs to the sorting nexin family.

It is found in the cytoplasm. It localises to the cytosol. Its subcellular location is the preautophagosomal structure membrane. The protein localises to the endosome membrane. Its function is as follows. Sorting nexin, involved in the separation or division of vacuoles throughout the entire life cycle of the cells. Involved in retrieval of late-Golgi SNAREs from post-Golgi endosomes to the trans-Golgi network, for cytoplasm to vacuole transport (Cvt), and autophagy of large cargos including mitophagy, pexophagy and glycophagy. This Debaryomyces hansenii (strain ATCC 36239 / CBS 767 / BCRC 21394 / JCM 1990 / NBRC 0083 / IGC 2968) (Yeast) protein is Sorting nexin-4 (SNX4).